The primary structure comprises 92 residues: mRNA interferase toxin YafQ (92 aa).

Catalysis depends on H87, which acts as the Proton donor.

It belongs to the RelE toxin family. YafQ subfamily. Monomer in the absence of antitoxin. Forms a heterotetramer with antitoxin DinJ, with 2 YafQ-DinJ dimers associated via the N-terminus of the DinJ antitoxins (YafQ-(DinJ)2-YafQ). In this complex the toxin activity is inhibited. Binds the 70S ribosome via the 50S ribosomal subunit.

Functionally, toxic component of a type II toxin-antitoxin (TA) system. A sequence-specific mRNA endoribonuclease that inhibits translation elongation and induces bacterial stasis. Cleavage occurs between the second and third residue of the Lys codon followed by a G or A (5'AAA(G/A)3'), is reading-frame dependent and occurs within the 5' end of most mRNAs. Ribosome-binding confers the sequence specificity and reading frame-dependence. When overexpressed in liquid media YafQ partially inhibits protein synthesis, with a reduction in growth rate and colony growth rate. This effect is counteracted by coexpression with cognate antitoxin DinJ. YafQ and DinJ together bind their own promoter, and repress its expression. In terms of biological role, cell death governed by the MazE-MazF and DinJ-YafQ TA systems seems to play a role in biofilm formation. The chain is mRNA interferase toxin YafQ (yafQ) from Escherichia coli (strain K12).